Consider the following 277-residue polypeptide: Phosphate import ATP-binding protein PstB 2 (277 aa).

One can recognise an ABC transporter domain in the interval 31 to 272 (IEVPGLNLFY…PAKKQTEDYI (242 aa)). 63 to 70 (GPSGCGKS) provides a ligand contact to ATP.

The protein belongs to the ABC transporter superfamily. Phosphate importer (TC 3.A.1.7) family. The complex is composed of two ATP-binding proteins (PstB), two transmembrane proteins (PstC and PstA) and a solute-binding protein (PstS).

Its subcellular location is the cell inner membrane. The enzyme catalyses phosphate(out) + ATP + H2O = ADP + 2 phosphate(in) + H(+). Part of the ABC transporter complex PstSACB involved in phosphate import. Responsible for energy coupling to the transport system. The polypeptide is Phosphate import ATP-binding protein PstB 2 (Pseudomonas savastanoi pv. phaseolicola (strain 1448A / Race 6) (Pseudomonas syringae pv. phaseolicola (strain 1448A / Race 6))).